The chain runs to 71 residues: Small ribosomal subunit protein bS21 (71 aa).

Over residues 48 to 59 (KAAAAVKRHAKK) the composition is skewed to basic residues. A disordered region spans residues 48-71 (KAAAAVKRHAKKVQRENRKFQRLY). A compositionally biased stretch (basic and acidic residues) spans 60–71 (VQRENRKFQRLY).

The protein belongs to the bacterial ribosomal protein bS21 family.

In Saccharophagus degradans (strain 2-40 / ATCC 43961 / DSM 17024), this protein is Small ribosomal subunit protein bS21.